We begin with the raw amino-acid sequence, 1372 residues long: DNA-directed RNA polymerase subunit beta (1372 aa).

Belongs to the RNA polymerase beta chain family. As to quaternary structure, the RNAP catalytic core consists of 2 alpha, 1 beta, 1 beta' and 1 omega subunit. When a sigma factor is associated with the core the holoenzyme is formed, which can initiate transcription.

The enzyme catalyses RNA(n) + a ribonucleoside 5'-triphosphate = RNA(n+1) + diphosphate. Functionally, DNA-dependent RNA polymerase catalyzes the transcription of DNA into RNA using the four ribonucleoside triphosphates as substrates. The polypeptide is DNA-directed RNA polymerase subunit beta (Nitratidesulfovibrio vulgaris (strain DP4) (Desulfovibrio vulgaris)).